Here is a 793-residue protein sequence, read N- to C-terminus: Methionine--tRNA ligase (793 aa).

A 'HIGH' region motif is present at residues 11-21 (PYVNNFPHLGN). Zn(2+)-binding residues include Cys142, Cys145, Cys155, and Cys158. Residues 334–338 (KFSKS) carry the 'KMSKS' region motif. An ATP-binding site is contributed by Lys337. Residues 581–590 (SQKDRKKSEK) show a composition bias toward basic and acidic residues. The segment at 581–610 (SQKDRKKSEKGCSACKDSGSSKSDAAASSA) is disordered. The segment covering 591-610 (GCSACKDSGSSKSDAAASSA) has biased composition (low complexity). The tRNA-binding domain occupies 622-727 (FSKKIALKTA…PWAAPGTPVI (106 aa)).

It belongs to the class-I aminoacyl-tRNA synthetase family. MetG type 1 subfamily. Homodimer. Zn(2+) is required as a cofactor.

The protein resides in the cytoplasm. The enzyme catalyses tRNA(Met) + L-methionine + ATP = L-methionyl-tRNA(Met) + AMP + diphosphate. Is required not only for elongation of protein synthesis but also for the initiation of all mRNA translation through initiator tRNA(fMet) aminoacylation. The protein is Methionine--tRNA ligase of Treponema denticola (strain ATCC 35405 / DSM 14222 / CIP 103919 / JCM 8153 / KCTC 15104).